Reading from the N-terminus, the 230-residue chain is uncharacterized protein (230 aa).

The protein belongs to the transferase hexapeptide repeat family.

This is an uncharacterized protein from Escherichia coli (strain K12).